Consider the following 947-residue polypeptide: Protocadherin alpha-4 (947 aa).

The first 29 residues, 1–29, serve as a signal peptide directing secretion; it reads MEFSWGSGQESRRLLLLLLLLAAWEAGNG. 6 Cadherin domains span residues 30 to 133, 134 to 242, 243 to 350, 351 to 455, 456 to 565, and 588 to 678; these read QLHY…PPVF, PATQ…APAF, DRTI…VPDL, EFKS…APAF, AQPE…APAL, and GHVV…APKA. Over 30 to 697 the chain is Extracellular; sequence QLHYSVSEEA…GPDAALVDVN (668 aa). Cys96 and Cys102 are oxidised to a cystine. Asn139, Asn257, and Asn265 each carry an N-linked (GlcNAc...) asparagine glycan. An N-linked (GlcNAc...) asparagine glycan is attached at Asn548. Residues 698–718 form a helical membrane-spanning segment; the sequence is VYLIIAICAVSSLLVLTLLLY. The Cytoplasmic segment spans residues 719 to 947; that stretch reads TALRCSALPT…GNSTTDNSDQ (229 aa). 6 PXXP repeats span residues 734 to 737, 774 to 777, 796 to 799, 829 to 832, 870 to 873, and 888 to 891; these read PGKP, PSLP, PRQP, PGGP, PGNP, and PGSP. A 6 X 4 AA repeats of P-X-X-P region spans residues 734-891; sequence PGKPTLVCSS…PDKFIIPGSP (158 aa). The required for interaction with FYN stretch occupies residues 738-947; the sequence is TLVCSSAVGS…GNSTTDNSDQ (210 aa). Disordered stretches follow at residues 754 to 805, 828 to 853, and 868 to 947; these read RRPR…DWRY, GPGG…EVSP, and YGPG…NSDQ. The segment covering 906-920 has biased composition (basic and acidic residues); that stretch reads DKSDFITFGKKEETK.

As to quaternary structure, forms homodimers in trans (molecules expressed by two different cells). Forms promiscuous heterodimers in cis (at the plasma membrane of the same cell) with other protocadherins. Interacts with FYN.

It localises to the cell membrane. Its function is as follows. Calcium-dependent cell-adhesion protein involved in cells self-recognition and non-self discrimination. Thereby, it is involved in the establishment and maintenance of specific neuronal connections in the brain. The sequence is that of Protocadherin alpha-4 from Homo sapiens (Human).